Here is a 456-residue protein sequence, read N- to C-terminus: MSRAHGSPRSFFPVGNPFRVMFPGGAHLSRKLQELLASYEDALALSLRKLKPEAASDVLTLSWMRLAVDCLSELHTNIANLITDLELPVSDWDDKWVDIYLNSSVKLLDICIALSSELSRLDQGQLLLQYALHVLGSESGVPSQEQLKRAEPSLREWMELVGVRCARLVSCSATLQELAGNLSLMKVKNSAKGKVLMRALYGIESVTVFVCSIFVAVLSGSPKPLVELHVPEKFGWSQAFNDLHTAVSEELTRQLSGGSVAAVKELEEVEACARRLHVLASTSQLEEEAANLANAVSHTEEEVMSDSIAQEGDHHCGLKLADDTTREGGIVISESIAEGGTQEAEMKKDISYEKEVAMVERISYKEHQDSNVKQANGSSDESALVVPERTSVQESKEELLNCISSMSKSAEGLRHGLDSLSKRVGDFFQIVLTGRDALLCNLRISDAASKVAEVSS.

Residues Val195–Val217 traverse the membrane as a helical segment. The tract at residues Gln368–Thr390 is disordered. The span at Asn371–Glu381 shows a compositional bias: polar residues.

Belongs to the ROH1 family.

The protein localises to the membrane. The protein is UPF0496 protein 4 of Oryza sativa subsp. japonica (Rice).